The chain runs to 213 residues: Imidazole glycerol phosphate synthase subunit HisH (213 aa).

The Glutamine amidotransferase type-1 domain occupies 1-212 (MLAILDYKAG…HRYCTEAADA (212 aa)). The active-site Nucleophile is Cys-79. Catalysis depends on residues His-187 and Glu-189.

Heterodimer of HisH and HisF.

It is found in the cytoplasm. It catalyses the reaction 5-[(5-phospho-1-deoxy-D-ribulos-1-ylimino)methylamino]-1-(5-phospho-beta-D-ribosyl)imidazole-4-carboxamide + L-glutamine = D-erythro-1-(imidazol-4-yl)glycerol 3-phosphate + 5-amino-1-(5-phospho-beta-D-ribosyl)imidazole-4-carboxamide + L-glutamate + H(+). It carries out the reaction L-glutamine + H2O = L-glutamate + NH4(+). Its pathway is amino-acid biosynthesis; L-histidine biosynthesis; L-histidine from 5-phospho-alpha-D-ribose 1-diphosphate: step 5/9. IGPS catalyzes the conversion of PRFAR and glutamine to IGP, AICAR and glutamate. The HisH subunit catalyzes the hydrolysis of glutamine to glutamate and ammonia as part of the synthesis of IGP and AICAR. The resulting ammonia molecule is channeled to the active site of HisF. The sequence is that of Imidazole glycerol phosphate synthase subunit HisH from Nitratidesulfovibrio vulgaris (strain DP4) (Desulfovibrio vulgaris).